Reading from the N-terminus, the 249-residue chain is Triosephosphate isomerase (249 aa).

Position 9 to 11 (asparagine 9 to lysine 11) interacts with substrate. Histidine 95 functions as the Electrophile in the catalytic mechanism. Glutamate 166 serves as the catalytic Proton acceptor. Substrate-binding positions include glycine 172, serine 211, and glycine 232 to glycine 233.

Belongs to the triosephosphate isomerase family. Homodimer.

It localises to the cytoplasm. It carries out the reaction D-glyceraldehyde 3-phosphate = dihydroxyacetone phosphate. Its pathway is carbohydrate biosynthesis; gluconeogenesis. The protein operates within carbohydrate degradation; glycolysis; D-glyceraldehyde 3-phosphate from glycerone phosphate: step 1/1. Involved in the gluconeogenesis. Catalyzes stereospecifically the conversion of dihydroxyacetone phosphate (DHAP) to D-glyceraldehyde-3-phosphate (G3P). In Legionella pneumophila subsp. pneumophila (strain Philadelphia 1 / ATCC 33152 / DSM 7513), this protein is Triosephosphate isomerase.